The following is a 22-amino-acid chain: Zinc metalloproteinase oxiagin (22 aa).

Residues Cys14–Val22 enclose the Peptidase M12B domain.

The protein belongs to the venom metalloproteinase (M12B) family. P-III subfamily. P-IIId sub-subfamily. Heterotrimer; disulfide-linked. The heterotrimer consists of 1 metalloproteinase chain and 2 lectin chains. Zn(2+) serves as cofactor. Post-translationally, N-glycosylated. Expressed by the venom gland.

The protein resides in the secreted. Snake venom metalloproteinase that inhibits the classical complement pathway dose-dependently. It acts by binding to carbohydrates of IgG within the antibody-sensitized sheep erythrocytes (EA) complex, and thus prevents interaction of component C2 with immobilized C4b. Also induces cation-independent hemagglutination that can be prevented by D-galactose pretreatment. The protein is Zinc metalloproteinase oxiagin of Naja oxiana (Central Asian cobra).